Consider the following 88-residue polypeptide: uncharacterized protein (88 aa).

Positions 1-24 (MLPRSCKDFYETLRTAVLCGQACA) are cleaved as a signal peptide.

It to Rhizobium NGR234A y4oL.

This is an uncharacterized protein from Sinorhizobium fredii (strain NBRC 101917 / NGR234).